The following is a 690-amino-acid chain: Probable serine/threonine-protein kinase drkB (690 aa).

The N-terminal stretch at 1-24 (MKVQIVFFSITVFIFVLFLLSVES) is a signal peptide. Positions 51-110 (DSKSSEHTTSSSSSSNSKNKGDSSSSSSNSGSSSNSIISGDSNSKDAPTTSSDSLSPATP) are disordered. Residues 57 to 96 (HTTSSSSSSNSKNKGDSSSSSSNSGSSSNSIISGDSNSKD) show a composition bias toward low complexity. The span at 97 to 107 (APTTSSDSLSP) shows a compositional bias: polar residues. Residues asparagine 134, asparagine 180, asparagine 220, and asparagine 250 are each glycosylated (N-linked (GlcNAc...) asparagine). Residues 287 to 335 (TITPTPTITPTPTITPTVTPTATPSTTPSTTPTTTPSTPTPTPTKSPYS) are disordered. The segment covering 296–323 (PTPTITPTVTPTATPSTTPSTTPTTTPS) has biased composition (low complexity). A helical transmembrane segment spans residues 346–366 (IIIASSITGGLLISIFSFVFI). Residues 391-644 (IKIGVRIGKG…EQCLEILESI (254 aa)) enclose the Protein kinase domain. ATP contacts are provided by residues 397–405 (IGKGNFGEV) and lysine 418. Aspartate 514 functions as the Proton acceptor in the catalytic mechanism. Positions 649-690 (FDDIPVNNNNNNNSNNNENNNENNNNSDNNNNDINYSNRVIN) are disordered. The span at 655–681 (NNNNNNNSNNNENNNENNNNSDNNNND) shows a compositional bias: low complexity.

It belongs to the protein kinase superfamily. TKL Ser/Thr protein kinase family.

Its subcellular location is the membrane. The catalysed reaction is L-seryl-[protein] + ATP = O-phospho-L-seryl-[protein] + ADP + H(+). The enzyme catalyses L-threonyl-[protein] + ATP = O-phospho-L-threonyl-[protein] + ADP + H(+). The sequence is that of Probable serine/threonine-protein kinase drkB (drkB) from Dictyostelium discoideum (Social amoeba).